The primary structure comprises 142 residues: Pleckstrin homology-like domain family A member 2 (142 aa).

Ser-3 carries the phosphoserine modification. Positions 7–99 (VLREGELEKR…WNASITLALI (93 aa)) constitute a PH domain.

It belongs to the PHLDA2 family.

It is found in the cytoplasm. The protein resides in the membrane. Its function is as follows. Plays a role in regulating placenta growth. May act via its PH domain that competes with other PH domain-containing proteins, thereby preventing their binding to membrane lipids. The sequence is that of Pleckstrin homology-like domain family A member 2 (PHLDA2) from Bos taurus (Bovine).